The chain runs to 374 residues: 2-oxoglutarate-Fe(II) type oxidoreductase ppzC (374 aa).

Residues 111-130 (KDGPFDSGYRGPGTQRVNPT) form a disordered region. The Fe2OG dioxygenase domain maps to 220–330 (YPDASLEINF…RVSMPFFWGF (111 aa)). 3 residues coordinate Fe cation: H254, D256, and H311. 2-oxoglutarate is bound at residue R321.

The protein belongs to the iron/ascorbate-dependent oxidoreductase family. Fe(2+) is required as a cofactor.

It catalyses the reaction peramine + 2-oxoglutarate + O2 = 8-hydroxyperamine + succinate + CO2. Its pathway is secondary metabolite biosynthesis. Functionally, 2-oxoglutarate-Fe(II) type oxidoreductase; part of the gene cluster that mediates the biosynthesis of pyrrolopyrazines, secondary metabolites showing insecticidal activity. Within the pathway, ppzC uses peramine as substrate for hydroxylation to yield the novel analog 8-hydroxyperamine. The single multifunctional NRPS ppzA is sufficient to produce peramine via condensation of 1-pyrroline-5-carboxylate and arginine, N-methylation of the alpha-amino group of arginine and reduction of the thioester and the cyclization to form an iminium ion resulting in release from the peptide synthetase. Deprotonation of this intermediate and oxidation of the pyrroline ring would give rise to peramine. In Epichloe species that produce only peramine, the peramine synthetase gene is not localized in a gene cluster, in contrast to Metarhizium species that contain additional pyrrolopyrazine biosynthesis genes. The 2-oxoglutarate-Fe(II) type oxidoreductase ppzC hydroxylates peramine to yield the newly identified compound 8-hydroxyperamine whereas ppzD converts L-proline into trans-4-hydroxy-L-proline, a precursor of peramine biosynthesis. This chain is 2-oxoglutarate-Fe(II) type oxidoreductase ppzC, found in Metarhizium rileyi (strain RCEF 4871) (Nomuraea rileyi).